The chain runs to 147 residues: Angiogenin (147 aa).

Positions 1–24 (MVILLGPLLLVFMLGLGLAPLSLA) are cleaved as a signal peptide. H37 (proton acceptor) is an active-site residue. R45 and D46 together coordinate tRNA. 3 disulfide bridges follow: C50–C104, C63–C115, and C81–C130. Positions 55 to 59 (KQRGL) match the Nucleolar localization signal motif. 2 residues coordinate tRNA: C104 and I126. Catalysis depends on H137, which acts as the Proton donor.

This sequence belongs to the pancreatic ribonuclease family. In terms of assembly, homodimer. Interacts with RNH1; inhibiting ANG ribonuclease activity. Interacts with PCNA.

Its subcellular location is the secreted. The protein localises to the nucleus. It localises to the nucleolus. It is found in the cytoplasm. The protein resides in the stress granule. Has weak tRNA ribonuclease activity by itself due to partial autoinhibition by its C-terminus, which folds into a short alpha-helix that partially occludes the substrate-binding site. In absence of stress, the ribonuclease activity is inhibited by RNH1 in the cytoplasm. In response to stress, dissociates from RNH1 in the cytoplasm and associates with cytoplasmic ribosomes with vacant A-sites: ribosomes directly activate the tRNA ribonuclease activity of ANG by refolding the C-terminal alpha-helix. In response to stress, the angiogenic activity of ANG is inhibited by RNH1 in the nucleus. In terms of biological role, secreted ribonuclease that can either promote or restrict cell proliferation of target cells, depending on the context. Endocytosed in target cells via its receptor PLXNB2 and translocates to the cytoplasm or nucleus. Under stress conditions, localizes to the cytoplasm and promotes the assembly of stress granules (SGs): specifically cleaves a subset of tRNAs within anticodon loops to produce tRNA-derived stress-induced fragments (tiRNAs), resulting in translation repression and inhibition of cell proliferation. tiRNas also prevent formation of apoptosome, thereby promoting cell survival. Preferentially cleaves RNAs between a pyrimidine and an adenosine residue, suggesting that it cleaves the anticodon loop of tRNA(Ala) (32-UUAGCAU-38) after positions 33 and 36. Cleaves a subset of tRNAs, including tRNA(Ala), tRNA(Glu), tRNA(Gly), tRNA(Lys), tRNA(Val), tRNA(His), tRNA(Asp) and tRNA(Sec). Under growth conditions and in differentiated cells, translocates to the nucleus and stimulates ribosomal RNA (rRNA) transcription, including that containing the initiation site sequences of 45S rRNA, thereby promoting cell growth and proliferation. Angiogenin induces vascularization of normal and malignant tissues via its ability to promote rRNA transcription. Involved in hematopoietic stem and progenitor cell (HSPC) growth and survival by promoting rRNA transcription in growth conditions and inhibiting translation in response to stress, respectively. Mediates the crosstalk between myeloid and intestinal epithelial cells to protect the intestinal epithelial barrier integrity: secreted by myeloid cells and promotes intestinal epithelial cells proliferation and survival. Also mediates osteoclast-endothelial cell crosstalk in growing bone: produced by osteoclasts and protects the neighboring vascular cells against senescence by promoting rRNA transcription. The polypeptide is Angiogenin (ANG) (Sus scrofa (Pig)).